Reading from the N-terminus, the 459-residue chain is Glycosyl hydrolase family 109 protein 1 (459 aa).

The segment at residues 1 to 31 (MHNIHRRHFLKAAGAVTAGLVTANIALNANA) is a signal peptide (tat-type signal). NAD(+) is bound by residues 64-65 (ER), D86, 135-138 (WEWH), 155-156 (EV), and N184. Substrate contacts are provided by residues Y213, R232, 244–247 (YPTH), and Y326. Y244 contributes to the NAD(+) binding site.

The protein belongs to the Gfo/Idh/MocA family. Glycosyl hydrolase 109 subfamily. It depends on NAD(+) as a cofactor. In terms of processing, predicted to be exported by the Tat system. The position of the signal peptide cleavage has not been experimentally proven.

Functionally, glycosidase. This chain is Glycosyl hydrolase family 109 protein 1, found in Shewanella sp. (strain MR-7).